Reading from the N-terminus, the 448-residue chain is Zinc finger CCCH domain-containing protein 43 (448 aa).

Positions M1 to V106 are disordered. A compositionally biased stretch (basic and acidic residues) spans S24–K45. The span at V63 to N79 shows a compositional bias: polar residues. Acidic residues predominate over residues Q80 to R89. 5 consecutive C3H1-type zinc fingers follow at residues R110–A138, K158–P186, R204–P232, R346–N374, and R392–Q420. Residues S424–N448 form a disordered region. Polar residues predominate over residues V437–N448.

The protein resides in the nucleus. The chain is Zinc finger CCCH domain-containing protein 43 from Arabidopsis thaliana (Mouse-ear cress).